We begin with the raw amino-acid sequence, 281 residues long: Probable endonuclease 4 (281 aa).

9 residues coordinate Zn(2+): His69, His109, Glu145, Asp179, His182, His216, Asp229, His231, and Glu261.

It belongs to the AP endonuclease 2 family. Zn(2+) serves as cofactor.

It carries out the reaction Endonucleolytic cleavage to 5'-phosphooligonucleotide end-products.. In terms of biological role, endonuclease IV plays a role in DNA repair. It cleaves phosphodiester bonds at apurinic or apyrimidinic (AP) sites, generating a 3'-hydroxyl group and a 5'-terminal sugar phosphate. The protein is Probable endonuclease 4 of Aeromonas salmonicida (strain A449).